The sequence spans 339 residues: Heat-inducible transcription repressor HrcA (339 aa).

It belongs to the HrcA family.

Its function is as follows. Negative regulator of class I heat shock genes (grpE-dnaK-dnaJ and groELS operons). Prevents heat-shock induction of these operons. The protein is Heat-inducible transcription repressor HrcA of Methylobacillus flagellatus (strain ATCC 51484 / DSM 6875 / VKM B-1610 / KT).